A 189-amino-acid chain; its full sequence is Interferon alpha-13 (189 aa).

A signal peptide spans 1-23 (MARPCAFLMVLVVLSYWSACSLG). Disulfide bonds link Cys24–Cys122 and Cys52–Cys162. N-linked (GlcNAc...) asparagine glycosylation is found at Asn94 and Asn101.

Belongs to the alpha/beta interferon family.

The protein localises to the secreted. Functionally, exhibits antiviral activity against Theiler's virus, Mengo virus and vesicular stomatitis virus. Interferons alpha stimulate the production of two enzymes: a protein kinase and an oligoadenylate synthetase. This chain is Interferon alpha-13 (Ifna13), found in Mus musculus (Mouse).